The chain runs to 467 residues: MEEELAMLRQLIGQLQELLHNGSPPPPSSSSSLSSSSPSFLVLHHPQYQNGWCLPCIEDTSADDCCDIVMAGGKRPGIFKMLETVKPPVKRTRKERTQGKSCTEVDEISGNMDQEIWQEFPQDLFEDVVSRLPMATFFQFRAVCRKWNALIDSDSFSRCFTELPQTIPWFYTITHENVNSGQVYDPSLKKWHHPIIPALPKKSIVLPMASAGGLVCFLDIGHRNFYVSNPLTKSFRELPARSFKVWSRVAVGMTLNGNSTSHGYKVLWVGCEGEYEVYDSLSNVWTKRGTIPSNIKLPVLLNFKSQPVAIHSTLYFMLTDPEGILSYDMVSGKWKQFIIPGPPDLSDHTLAACGERLMLVGLLTKNAATCVCIWELQKMTLLWKEVDRMPNIWCLEFYGKHIRMNCLGNKGCLILLSLRSRQMNRLITYNAVTREWTKVPGCTVPRGRKRLWIACGTAFHPSPTARA.

In terms of domain architecture, F-box spans 114–163 (QEIWQEFPQDLFEDVVSRLPMATFFQFRAVCRKWNALIDSDSFSRCFTEL). Kelch repeat units follow at residues 163-211 (LPQT…MASA), 252-305 (GMTL…NFKS), and 406-456 (CLGN…IACG).

This is F-box only protein 6 (FBX6) from Arabidopsis thaliana (Mouse-ear cress).